The chain runs to 402 residues: Large ribosomal subunit protein uL3 (402 aa).

The tract at residues Met-1–Asp-35 is disordered. Basic residues predominate over residues Pro-18–Ala-31.

It belongs to the universal ribosomal protein uL3 family.

The protein resides in the cytoplasm. Functionally, the L3 protein is a component of the large subunit of cytoplasmic ribosomes. The protein is Large ribosomal subunit protein uL3 (RPL3) of Toxocara canis (Canine roundworm).